The chain runs to 518 residues: Probable Xaa-Pro aminopeptidase HCDG_07916 (518 aa).

Mn(2+) is bound by residues Asp-289, Asp-300, Glu-437, and Glu-475.

It belongs to the peptidase M24B family. It depends on Mn(2+) as a cofactor.

It carries out the reaction Release of any N-terminal amino acid, including proline, that is linked to proline, even from a dipeptide or tripeptide.. In terms of biological role, catalyzes the removal of a penultimate prolyl residue from the N-termini of peptides. The sequence is that of Probable Xaa-Pro aminopeptidase HCDG_07916 from Ajellomyces capsulatus (strain H143) (Darling's disease fungus).